The primary structure comprises 471 residues: MTAQTLYDKLWNSHVVREEADGTALLYIDRHLVHEVTSPQAFEGLKLAGRRLWRVDSVVSTADHNTPTDHWDQGIQDPISRQQVETLDANIKAFGALAYFPFKDKGQGIVHVMGPEQGATLPGMTVVCGDSHTSTHGAFGALAHGIGTSEVEHVMATQCLVAKKSKNMLVRVDGRLGAGITAKDVALAIIGKIGTAGGTGYAIEFGGEAIRGLSMEGRMTLCNMAIEGGARSGMVAVDDKTIEYVKGRPFAPKGEQWNQAVAYWNTLHSDDGAHFDQVVALDAADIQPQVTWGTSPEMVAEVGGKVPNPANESDPVKKAGIERALAYMGLEADTPIEQIPVDVVFIGSCTNSRIEDLREAAAVAKGRSKAGNVKQVLVVPGSGLVKAQAEAEGLDKIFVAAGFEWREPGCSMCLAMNADRLLPGERCASTSNRNFEGRQGQGGRTHLVSPAMAAAAAVAGRFVDVRRLAAG.

The [4Fe-4S] cluster site is built by cysteine 349, cysteine 410, and cysteine 413.

The protein belongs to the aconitase/IPM isomerase family. LeuC type 1 subfamily. In terms of assembly, heterodimer of LeuC and LeuD. The cofactor is [4Fe-4S] cluster.

The enzyme catalyses (2R,3S)-3-isopropylmalate = (2S)-2-isopropylmalate. It functions in the pathway amino-acid biosynthesis; L-leucine biosynthesis; L-leucine from 3-methyl-2-oxobutanoate: step 2/4. Catalyzes the isomerization between 2-isopropylmalate and 3-isopropylmalate, via the formation of 2-isopropylmaleate. The sequence is that of 3-isopropylmalate dehydratase large subunit from Chromobacterium violaceum (strain ATCC 12472 / DSM 30191 / JCM 1249 / CCUG 213 / NBRC 12614 / NCIMB 9131 / NCTC 9757 / MK).